The sequence spans 374 residues: Queuine tRNA-ribosyltransferase (374 aa).

The active-site Proton acceptor is Asp89. Substrate is bound by residues 89 to 93, Asp143, Gln187, and Gly214; that span reads DSGGF. Positions 245–251 are RNA binding; the sequence is GVGKPED. Catalysis depends on Asp264, which acts as the Nucleophile. An RNA binding; important for wobble base 34 recognition region spans residues 269 to 273; it reads TRNAR. Cys302, Cys304, Cys307, and His333 together coordinate Zn(2+).

This sequence belongs to the queuine tRNA-ribosyltransferase family. Homodimer. Within each dimer, one monomer is responsible for RNA recognition and catalysis, while the other monomer binds to the replacement base PreQ1. It depends on Zn(2+) as a cofactor.

The enzyme catalyses 7-aminomethyl-7-carbaguanine + guanosine(34) in tRNA = 7-aminomethyl-7-carbaguanosine(34) in tRNA + guanine. The protein operates within tRNA modification; tRNA-queuosine biosynthesis. Its function is as follows. Catalyzes the base-exchange of a guanine (G) residue with the queuine precursor 7-aminomethyl-7-deazaguanine (PreQ1) at position 34 (anticodon wobble position) in tRNAs with GU(N) anticodons (tRNA-Asp, -Asn, -His and -Tyr). Catalysis occurs through a double-displacement mechanism. The nucleophile active site attacks the C1' of nucleotide 34 to detach the guanine base from the RNA, forming a covalent enzyme-RNA intermediate. The proton acceptor active site deprotonates the incoming PreQ1, allowing a nucleophilic attack on the C1' of the ribose to form the product. After dissociation, two additional enzymatic reactions on the tRNA convert PreQ1 to queuine (Q), resulting in the hypermodified nucleoside queuosine (7-(((4,5-cis-dihydroxy-2-cyclopenten-1-yl)amino)methyl)-7-deazaguanosine). The chain is Queuine tRNA-ribosyltransferase from Serratia proteamaculans (strain 568).